Reading from the N-terminus, the 199-residue chain is Holliday junction branch migration complex subunit RuvA (199 aa).

Residues 1–63 (MIGCLIGEVF…EDAQQLYGFS (63 aa)) are domain I. The segment at 64-142 (DAQEKTIFRT…TLAQGTSSAA (79 aa)) is domain II. Residues 143–150 (ALPQIQFV) form a flexible linker region. The domain III stretch occupies residues 150–199 (VSNSPVAEAEAALQSLGYKPLEAQKAVAAVKADYTESADIIRAALKSMMK).

Belongs to the RuvA family. Homotetramer. Forms an RuvA(8)-RuvB(12)-Holliday junction (HJ) complex. HJ DNA is sandwiched between 2 RuvA tetramers; dsDNA enters through RuvA and exits via RuvB. An RuvB hexamer assembles on each DNA strand where it exits the tetramer. Each RuvB hexamer is contacted by two RuvA subunits (via domain III) on 2 adjacent RuvB subunits; this complex drives branch migration. In the full resolvosome a probable DNA-RuvA(4)-RuvB(12)-RuvC(2) complex forms which resolves the HJ.

It localises to the cytoplasm. Its function is as follows. The RuvA-RuvB-RuvC complex processes Holliday junction (HJ) DNA during genetic recombination and DNA repair, while the RuvA-RuvB complex plays an important role in the rescue of blocked DNA replication forks via replication fork reversal (RFR). RuvA specifically binds to HJ cruciform DNA, conferring on it an open structure. The RuvB hexamer acts as an ATP-dependent pump, pulling dsDNA into and through the RuvAB complex. HJ branch migration allows RuvC to scan DNA until it finds its consensus sequence, where it cleaves and resolves the cruciform DNA. The sequence is that of Holliday junction branch migration complex subunit RuvA from Acinetobacter baumannii (strain SDF).